Here is a 287-residue protein sequence, read N- to C-terminus: ATP synthase gamma chain (287 aa).

Belongs to the ATPase gamma chain family. In terms of assembly, F-type ATPases have 2 components, CF(1) - the catalytic core - and CF(0) - the membrane proton channel. CF(1) has five subunits: alpha(3), beta(3), gamma(1), delta(1), epsilon(1). CF(0) has three main subunits: a, b and c.

The protein localises to the cell inner membrane. Produces ATP from ADP in the presence of a proton gradient across the membrane. The gamma chain is believed to be important in regulating ATPase activity and the flow of protons through the CF(0) complex. In Xanthomonas axonopodis pv. citri (strain 306), this protein is ATP synthase gamma chain.